Consider the following 88-residue polypeptide: Translation initiation factor IF-1 2 (88 aa).

One can recognise an S1-like domain in the interval 1-72 (MAKEELIEMQ…TKGRITFRHL (72 aa)).

The protein belongs to the IF-1 family. Component of the 30S ribosomal translation pre-initiation complex which assembles on the 30S ribosome in the order IF-2 and IF-3, IF-1 and N-formylmethionyl-tRNA(fMet); mRNA recruitment can occur at any time during PIC assembly.

The protein resides in the cytoplasm. Its function is as follows. One of the essential components for the initiation of protein synthesis. Stabilizes the binding of IF-2 and IF-3 on the 30S subunit to which N-formylmethionyl-tRNA(fMet) subsequently binds. Helps modulate mRNA selection, yielding the 30S pre-initiation complex (PIC). Upon addition of the 50S ribosomal subunit IF-1, IF-2 and IF-3 are released leaving the mature 70S translation initiation complex. The sequence is that of Translation initiation factor IF-1 2 from Acidovorax sp. (strain JS42).